Reading from the N-terminus, the 114-residue chain is MTISMLQSKIHRATVTDANLNYVGSITIDEELIKKAGMLEFQKVDILDINNGERFSTYIIKGKKGEICLNGAAARKVCIGDLVIIVSYAQMSTDEALNFKPKIVHVNSKNEALE.

Ser25 serves as the catalytic Schiff-base intermediate with substrate; via pyruvic acid. At Ser25 the chain carries Pyruvic acid (Ser). Thr57 lines the substrate pocket. Tyr58 functions as the Proton donor in the catalytic mechanism. 71-73 provides a ligand contact to substrate; sequence GAA.

This sequence belongs to the PanD family. In terms of assembly, heterooctamer of four alpha and four beta subunits. It depends on pyruvate as a cofactor. Is synthesized initially as an inactive proenzyme, which is activated by self-cleavage at a specific serine bond to produce a beta-subunit with a hydroxyl group at its C-terminus and an alpha-subunit with a pyruvoyl group at its N-terminus.

The protein resides in the cytoplasm. It catalyses the reaction L-aspartate + H(+) = beta-alanine + CO2. It participates in cofactor biosynthesis; (R)-pantothenate biosynthesis; beta-alanine from L-aspartate: step 1/1. Its function is as follows. Catalyzes the pyruvoyl-dependent decarboxylation of aspartate to produce beta-alanine. The protein is Aspartate 1-decarboxylase of Campylobacter hominis (strain ATCC BAA-381 / DSM 21671 / CCUG 45161 / LMG 19568 / NCTC 13146 / CH001A).